A 661-amino-acid chain; its full sequence is Probable urea active transporter 3 (661 aa).

Transmembrane regions (helical) follow at residues 13-33 (GIVI…TYVL), 56-76 (GLIS…LTSA), 86-106 (GSMW…VIAL), 132-152 (AVFL…LLLG), 165-185 (VVAA…SGGL), 197-217 (VIVY…SVHI), 251-271 (AVFV…CDPS), 288-308 (YFAG…AAAL), 352-372 (AGVL…LVAF), 397-417 (VTHV…VLFN), 419-439 (IGIT…PAVF), 454-474 (GMII…VGSC), 495-515 (VGNF…SYFF), 556-576 (IGIF…PLPM), and 591-611 (WIIV…FYPL).

This sequence belongs to the sodium:solute symporter (SSF) (TC 2.A.21) family.

It is found in the membrane. The protein resides in the golgi apparatus membrane. Its function is as follows. Involved in active transport of urea. This Schizosaccharomyces pombe (strain 972 / ATCC 24843) (Fission yeast) protein is Probable urea active transporter 3 (dur3-3).